The sequence spans 260 residues: NH(3)-dependent NAD(+) synthetase (260 aa).

31-38 is a binding site for ATP; sequence GLSGGLDS. Aspartate 37 is a Mg(2+) binding site. Arginine 112 is a deamido-NAD(+) binding site. Residue threonine 132 coordinates ATP. A Mg(2+)-binding site is contributed by glutamate 137. ATP contacts are provided by lysine 161 and serine 183.

Belongs to the NAD synthetase family. In terms of assembly, homodimer.

The enzyme catalyses deamido-NAD(+) + NH4(+) + ATP = AMP + diphosphate + NAD(+) + H(+). The protein operates within cofactor biosynthesis; NAD(+) biosynthesis; NAD(+) from deamido-NAD(+) (ammonia route): step 1/1. In terms of biological role, catalyzes the ATP-dependent amidation of deamido-NAD to form NAD. Uses ammonia as a nitrogen source. This chain is NH(3)-dependent NAD(+) synthetase, found in Helicobacter acinonychis (strain Sheeba).